The chain runs to 365 residues: Chorismate synthase (365 aa).

NADP(+) is bound at residue arginine 48. FMN-binding positions include arginine 130–serine 132, asparagine 242–alanine 243, glycine 290, lysine 305–serine 309, and arginine 331.

This sequence belongs to the chorismate synthase family. As to quaternary structure, homotetramer. The cofactor is FMNH2.

It catalyses the reaction 5-O-(1-carboxyvinyl)-3-phosphoshikimate = chorismate + phosphate. Its pathway is metabolic intermediate biosynthesis; chorismate biosynthesis; chorismate from D-erythrose 4-phosphate and phosphoenolpyruvate: step 7/7. Functionally, catalyzes the anti-1,4-elimination of the C-3 phosphate and the C-6 proR hydrogen from 5-enolpyruvylshikimate-3-phosphate (EPSP) to yield chorismate, which is the branch point compound that serves as the starting substrate for the three terminal pathways of aromatic amino acid biosynthesis. This reaction introduces a second double bond into the aromatic ring system. The sequence is that of Chorismate synthase from Erythrobacter litoralis (strain HTCC2594).